The following is a 637-amino-acid chain: Threonine--tRNA ligase (637 aa).

One can recognise a TGS domain in the interval 1 to 61 (MPNVKLPDGN…KEDCSLIIVT (61 aa)). The segment at 242–533 (DHRKLGKALD…LIEHYAGKLP (292 aa)) is catalytic. Residues cysteine 333, histidine 384, and histidine 510 each coordinate Zn(2+).

This sequence belongs to the class-II aminoacyl-tRNA synthetase family. Homodimer. The cofactor is Zn(2+).

It localises to the cytoplasm. It carries out the reaction tRNA(Thr) + L-threonine + ATP = L-threonyl-tRNA(Thr) + AMP + diphosphate + H(+). Catalyzes the attachment of threonine to tRNA(Thr) in a two-step reaction: L-threonine is first activated by ATP to form Thr-AMP and then transferred to the acceptor end of tRNA(Thr). Also edits incorrectly charged L-seryl-tRNA(Thr). This Legionella pneumophila (strain Paris) protein is Threonine--tRNA ligase.